The sequence spans 253 residues: Imidazole glycerol phosphate synthase subunit HisF (253 aa).

Active-site residues include Asp11 and Asp130.

This sequence belongs to the HisA/HisF family. In terms of assembly, heterodimer of HisH and HisF.

The protein resides in the cytoplasm. The enzyme catalyses 5-[(5-phospho-1-deoxy-D-ribulos-1-ylimino)methylamino]-1-(5-phospho-beta-D-ribosyl)imidazole-4-carboxamide + L-glutamine = D-erythro-1-(imidazol-4-yl)glycerol 3-phosphate + 5-amino-1-(5-phospho-beta-D-ribosyl)imidazole-4-carboxamide + L-glutamate + H(+). It functions in the pathway amino-acid biosynthesis; L-histidine biosynthesis; L-histidine from 5-phospho-alpha-D-ribose 1-diphosphate: step 5/9. In terms of biological role, IGPS catalyzes the conversion of PRFAR and glutamine to IGP, AICAR and glutamate. The HisF subunit catalyzes the cyclization activity that produces IGP and AICAR from PRFAR using the ammonia provided by the HisH subunit. The protein is Imidazole glycerol phosphate synthase subunit HisF of Caldanaerobacter subterraneus subsp. tengcongensis (strain DSM 15242 / JCM 11007 / NBRC 100824 / MB4) (Thermoanaerobacter tengcongensis).